The following is a 190-amino-acid chain: Crossover junction endodeoxyribonuclease RuvC (190 aa).

Residues Asp8, Glu67, and Asp139 contribute to the active site. Positions 8, 67, and 139 each coordinate Mg(2+).

The protein belongs to the RuvC family. Homodimer which binds Holliday junction (HJ) DNA. The HJ becomes 2-fold symmetrical on binding to RuvC with unstacked arms; it has a different conformation from HJ DNA in complex with RuvA. In the full resolvosome a probable DNA-RuvA(4)-RuvB(12)-RuvC(2) complex forms which resolves the HJ. The cofactor is Mg(2+).

It is found in the cytoplasm. The enzyme catalyses Endonucleolytic cleavage at a junction such as a reciprocal single-stranded crossover between two homologous DNA duplexes (Holliday junction).. Functionally, the RuvA-RuvB-RuvC complex processes Holliday junction (HJ) DNA during genetic recombination and DNA repair. Endonuclease that resolves HJ intermediates. Cleaves cruciform DNA by making single-stranded nicks across the HJ at symmetrical positions within the homologous arms, yielding a 5'-phosphate and a 3'-hydroxyl group; requires a central core of homology in the junction. The consensus cleavage sequence is 5'-(A/T)TT(C/G)-3'. Cleavage occurs on the 3'-side of the TT dinucleotide at the point of strand exchange. HJ branch migration catalyzed by RuvA-RuvB allows RuvC to scan DNA until it finds its consensus sequence, where it cleaves and resolves the cruciform DNA. This Haemophilus influenzae (strain PittGG) protein is Crossover junction endodeoxyribonuclease RuvC.